The primary structure comprises 528 residues: Endoglucanase 24 (528 aa).

The first 24 residues, 1-24 (MGSKTKGCCGWLIVALVASLVATA), serve as a signal peptide directing secretion. Catalysis depends on aspartate 109, which acts as the Nucleophile. Asparagine 259 carries an N-linked (GlcNAc...) asparagine glycan. Histidine 446 is a catalytic residue. Asparagine 487 carries N-linked (GlcNAc...) asparagine glycosylation. Active-site residues include aspartate 492 and glutamate 501.

The protein belongs to the glycosyl hydrolase 9 (cellulase E) family.

The protein resides in the secreted. The catalysed reaction is Endohydrolysis of (1-&gt;4)-beta-D-glucosidic linkages in cellulose, lichenin and cereal beta-D-glucans.. The sequence is that of Endoglucanase 24 from Oryza sativa subsp. japonica (Rice).